Consider the following 264-residue polypeptide: Nuclear egress protein 1 (264 aa).

Basic residues predominate over residues 1-12 (MTVHKNRFRRSR). The interval 1–22 (MTVHKNRFRRSRSLSVTHRIQK) is disordered. The segment at 83–187 (CLEFSPYANE…HIVFQSRTLH (105 aa)) adopts a CCCH-type zinc-finger fold.

Belongs to the herpesviridae NEC1 protein family. As to quaternary structure, forms a heterohexameric complex with NEC2. Interacts with capsid vertex specific component 2/CVC2; this interaction directs the capsid to the host inner nuclear membrane to initiate budding. In terms of processing, phosphorylated at serine residues in the N-terminus. This phosphorylation regulates the localization within the inner nuclear membrane.

It is found in the host nucleus inner membrane. Plays an essential role in virion nuclear egress, the first step of virion release from infected cell. Within the host nucleus, NEC1 interacts with the newly formed capsid through the vertexes and directs it to the inner nuclear membrane by associating with NEC2. Induces the budding of the capsid at the inner nuclear membrane as well as its envelopment into the perinuclear space. There, the NEC1/NEC2 complex promotes the fusion of the enveloped capsid with the outer nuclear membrane and the subsequent release of the viral capsid into the cytoplasm where it will reach the secondary budding sites in the host Golgi or trans-Golgi network. The sequence is that of Nuclear egress protein 1 from Human herpesvirus 6B (HHV-6 variant B).